The following is a 731-amino-acid chain: MASSASSSSSPSSRPPLMALPSFYRPPWPSERGGEQRATDCWAGSPAAGGGRARATAMGIDLNNTASGGEEDAPAPGPVCRDLWHACAGPVVSLPRRGSAVVYLPQGHLSAAGAGGGIRGEVAVALPPHVACRVVDVELCADAATDEVYARLALRAEGEVFERNLHGGGIEREDDMEDGDEERKSRMLHMFCKTLTASDTSTHGGFSVPRRAAEDCFPPLDHKQLRPSQELVAKDLHGAKWRFRHIYRGQPRRHLLTTGWSSFVNKKKLVSGDAVLFLRGDDGELRLGVRRATQLKNEAIFKAFSSESSKMRTLSAVADSLKHGSVFHICYNPRATASEYVVPYWKFVKSFNHPVCIGMRFKFHFESEDVNERRSGMIAGVSEVDPIRWPGSKWRSLLVRWEDATDCNSQNRVSPWEIEIVGGSISVAHSLSASSSKRTKLCPQGNLDVPALYGNGRPDSVETEKFPRVLQGQELMGSRTHRATCSPQSIDITKSKSFDAWRFLTDTRSCMLGSSTSRLPVQYSGYTHQSVSFGESIGFPEVLQGQEISQTVPPFQGMLPDACSAKSRYELKNYVCTPATMNGLSSANEGYCLSLSTVPPSPPSSLMLYQTGVPQLELASKNNDKSGNDSQPALRQHKLLSETSWDQFKIGKASTPGNATKPGNGGREVDRTSCRLFGFSLTEKIIPTDKDGEKEVSYETDCQNPRMLDLFGYNCSTPGALHALCAAPLGI.

Over residues 1-22 (MASSASSSSSPSSRPPLMALPS) the composition is skewed to low complexity. The segment at 1 to 41 (MASSASSSSSPSSRPPLMALPSFYRPPWPSERGGEQRATDC) is disordered. Residues 191 to 293 (FCKTLTASDT…ELRLGVRRAT (103 aa)) constitute a DNA-binding region (TF-B3).

It belongs to the ARF family. Homo and heterodimers. As to expression, expressed in roots, culms, leaves and young panicles.

Its subcellular location is the nucleus. Functionally, auxin response factors (ARFs) are transcriptional factors that bind specifically to the DNA sequence 5'-TGTCTC-3' found in the auxin-responsive promoter elements (AuxREs). In Oryza sativa subsp. japonica (Rice), this protein is Auxin response factor 3 (ARF3).